A 389-amino-acid chain; its full sequence is D-alanyl-D-alanine carboxypeptidase DacF (389 aa).

Residues 1-23 (MKRLLSTLLIGIMLLTFAPSAFA) form the signal peptide. Ser64 acts as the Acyl-ester intermediate in catalysis. Catalysis depends on Lys67, which acts as the Proton acceptor. Residue Ser124 is part of the active site. Lys230 serves as a coordination point for substrate.

This sequence belongs to the peptidase S11 family.

It localises to the secreted. The enzyme catalyses Preferential cleavage: (Ac)2-L-Lys-D-Ala-|-D-Ala. Also transpeptidation of peptidyl-alanyl moieties that are N-acyl substituents of D-alanine.. It participates in cell wall biogenesis; peptidoglycan biosynthesis. In terms of biological role, removes C-terminal D-alanyl residues from sugar-peptide cell wall precursors. This chain is D-alanyl-D-alanine carboxypeptidase DacF (dacF), found in Bacillus subtilis (strain 168).